The sequence spans 2507 residues: Putative neurobeachin homolog (2507 aa).

Disordered stretches follow at residues 1–109, 1307–1377, and 1629–1649; these read MEIS…PPLP, PSSP…DGGR, and SRHEEANLPEGEKNEEPEISE. Residues 24-37 show a composition bias toward acidic residues; it reads PVEEGEEVNDEESN. Polar residues predominate over residues 1317–1340; it reads TTQKQENSENVNSETSPENGSNGK. Over residues 1360–1372 the composition is skewed to acidic residues; that stretch reads DGEEEENGEEGQG. Residues 1690-1798 enclose the BEACH-type PH domain; sequence PSSQSACFST…AVKKVVYQLP (109 aa). Residues 1817-2106 form the BEACH domain; sequence MTPRQLFKHS…QLLTEAHPPR (290 aa). WD repeat units lie at residues 2265–2308, 2326–2365, 2405–2444, and 2447–2486; these read GHGD…GFIA, GHEASISALCVSAEHGLVVSGCEDGVILIHTTSSDLLRRI, LVDDKIECVTVTRDGEFAVTGAVNGRINIWRMFPLTKLYT, and PLNSAVRSVAVVASHRFILGGLDSGAIVVFNADFNRWHYE.

This sequence belongs to the WD repeat neurobeachin family. As to quaternary structure, interacts with RII subunit of PKA. In terms of tissue distribution, expressed in vulval precursor cells and rectal epithelia in L2 and L3 larvae. In L4 larvae, expression is seen in intestinal epithelial cells.

The protein resides in the cytoplasm. It localises to the membrane. It is found in the nucleus. In terms of biological role, binds to type II regulatory subunits of protein kinase A and anchors/targets them to the membrane. May anchor the kinase to cytoskeletal and/or organelle-associated proteins. Regulates endosomal traffic in polarized epithelial cells such as the vulval precursor cells and intestinal cells. Thought to act as a negative regulator of lin-12 activity in vulval precursor cells. May have a role in the internalization process from basolateral surface of polarized epithelial cells. The polypeptide is Putative neurobeachin homolog (sel-2) (Caenorhabditis elegans).